Consider the following 202-residue polypeptide: tRNA (pseudouridine(54)-N(1))-methyltransferase (202 aa).

Leu-130, Gly-152, and Cys-185 together coordinate S-adenosyl-L-methionine.

It belongs to the methyltransferase superfamily. TrmY family. Homodimer.

It is found in the cytoplasm. The catalysed reaction is pseudouridine(54) in tRNA + S-adenosyl-L-methionine = N(1)-methylpseudouridine(54) in tRNA + S-adenosyl-L-homocysteine + H(+). Functionally, specifically catalyzes the N1-methylation of pseudouridine at position 54 (Psi54) in tRNAs. This Methanococcoides burtonii (strain DSM 6242 / NBRC 107633 / OCM 468 / ACE-M) protein is tRNA (pseudouridine(54)-N(1))-methyltransferase.